The primary structure comprises 370 residues: Anhydro-N-acetylmuramic acid kinase (370 aa).

Residue 12 to 19 (GTSLDGID) coordinates ATP.

This sequence belongs to the anhydro-N-acetylmuramic acid kinase family.

It catalyses the reaction 1,6-anhydro-N-acetyl-beta-muramate + ATP + H2O = N-acetyl-D-muramate 6-phosphate + ADP + H(+). It participates in amino-sugar metabolism; 1,6-anhydro-N-acetylmuramate degradation. It functions in the pathway cell wall biogenesis; peptidoglycan recycling. Functionally, catalyzes the specific phosphorylation of 1,6-anhydro-N-acetylmuramic acid (anhMurNAc) with the simultaneous cleavage of the 1,6-anhydro ring, generating MurNAc-6-P. Is required for the utilization of anhMurNAc either imported from the medium or derived from its own cell wall murein, and thus plays a role in cell wall recycling. This is Anhydro-N-acetylmuramic acid kinase from Yersinia enterocolitica serotype O:8 / biotype 1B (strain NCTC 13174 / 8081).